The chain runs to 603 residues: Terpenoid synthase 22 (603 aa).

Mg(2+) contacts are provided by Asp356, Asp360, Asn500, and Glu508. The DDXXD motif signature appears at 356-360 (DDTCD).

Belongs to the terpene synthase family. Tpsa subfamily. The cofactor is Mg(2+). Mn(2+) serves as cofactor. Predominantly expressed in siliques but also in flowers.

The protein resides in the cytoplasm. It participates in secondary metabolite biosynthesis; terpenoid biosynthesis. Functionally, involved in terpene biosynthesis in roots. Possesses sesquiterpene (C15) synthase activity in vitro. Does not seem to be involved in diterpene (C20) biosynthesis. This Arabidopsis thaliana (Mouse-ear cress) protein is Terpenoid synthase 22.